Here is a 106-residue protein sequence, read N- to C-terminus: Synaptic plasticity regulator PANTS (106 aa).

A disordered region spans residues 67–106 (LQQSEKTRLEGKQNNSPVWTLRKNPPPDWYLPLDPGKPRQ).

Belongs to the UPF0545 family. Post-translationally, rapidly degraded by proteolysis following neuronal stimulation, resulting in increased AMPA receptor clustering.

Its subcellular location is the synapse. The protein resides in the synaptic cleft. Functionally, negatively regulates long-term potentiation and modulates adult synaptic plasticity. The chain is Synaptic plasticity regulator PANTS from Xenopus laevis (African clawed frog).